A 342-amino-acid polypeptide reads, in one-letter code: 4-hydroxy-3-methylbut-2-enyl diphosphate reductase (342 aa).

C47 contributes to the [4Fe-4S] cluster binding site. 2 residues coordinate (2E)-4-hydroxy-3-methylbut-2-enyl diphosphate: H78 and H111. Dimethylallyl diphosphate contacts are provided by H78 and H111. Isopentenyl diphosphate contacts are provided by H78 and H111. [4Fe-4S] cluster is bound at residue C133. Residue H161 participates in (2E)-4-hydroxy-3-methylbut-2-enyl diphosphate binding. H161 contributes to the dimethylallyl diphosphate binding site. H161 contacts isopentenyl diphosphate. Residue E163 is the Proton donor of the active site. T201 is a binding site for (2E)-4-hydroxy-3-methylbut-2-enyl diphosphate. Residue C231 participates in [4Fe-4S] cluster binding. Residues S259, S260, N261, and S303 each contribute to the (2E)-4-hydroxy-3-methylbut-2-enyl diphosphate site. Dimethylallyl diphosphate-binding residues include S259, S260, N261, and S303. Isopentenyl diphosphate-binding residues include S259, S260, N261, and S303.

This sequence belongs to the IspH family. The cofactor is [4Fe-4S] cluster.

The enzyme catalyses isopentenyl diphosphate + 2 oxidized [2Fe-2S]-[ferredoxin] + H2O = (2E)-4-hydroxy-3-methylbut-2-enyl diphosphate + 2 reduced [2Fe-2S]-[ferredoxin] + 2 H(+). It carries out the reaction dimethylallyl diphosphate + 2 oxidized [2Fe-2S]-[ferredoxin] + H2O = (2E)-4-hydroxy-3-methylbut-2-enyl diphosphate + 2 reduced [2Fe-2S]-[ferredoxin] + 2 H(+). Its pathway is isoprenoid biosynthesis; dimethylallyl diphosphate biosynthesis; dimethylallyl diphosphate from (2E)-4-hydroxy-3-methylbutenyl diphosphate: step 1/1. The protein operates within isoprenoid biosynthesis; isopentenyl diphosphate biosynthesis via DXP pathway; isopentenyl diphosphate from 1-deoxy-D-xylulose 5-phosphate: step 6/6. In terms of biological role, catalyzes the conversion of 1-hydroxy-2-methyl-2-(E)-butenyl 4-diphosphate (HMBPP) into a mixture of isopentenyl diphosphate (IPP) and dimethylallyl diphosphate (DMAPP). Acts in the terminal step of the DOXP/MEP pathway for isoprenoid precursor biosynthesis. This is 4-hydroxy-3-methylbut-2-enyl diphosphate reductase from Anaplasma marginale (strain Florida).